A 450-amino-acid chain; its full sequence is Bifunctional protein GlmU (450 aa).

Positions 1–221 (MRCIVLAAGM…SCEFIGINNR (221 aa)) are pyrophosphorylase. Residues 6-9 (LAAG), lysine 20, glutamine 69, 74-75 (GT), 96-98 (YGD), glycine 135, glutamate 150, asparagine 165, and asparagine 219 each bind UDP-N-acetyl-alpha-D-glucosamine. A Mg(2+)-binding site is contributed by aspartate 98. Asparagine 219 lines the Mg(2+) pocket. The tract at residues 222–242 (IQLAQAEKFRRQWILEELMIK) is linker. Residues 243–450 (GVTIVDPETT…VIDKRKKEED (208 aa)) are N-acetyltransferase. UDP-N-acetyl-alpha-D-glucosamine contacts are provided by arginine 324 and lysine 342. Histidine 354 (proton acceptor) is an active-site residue. The UDP-N-acetyl-alpha-D-glucosamine site is built by tyrosine 357 and asparagine 368. 4 residues coordinate acetyl-CoA: alanine 371, serine 396, alanine 414, and arginine 431.

This sequence in the N-terminal section; belongs to the N-acetylglucosamine-1-phosphate uridyltransferase family. In the C-terminal section; belongs to the transferase hexapeptide repeat family. In terms of assembly, homotrimer. Mg(2+) serves as cofactor.

It localises to the cytoplasm. The catalysed reaction is alpha-D-glucosamine 1-phosphate + acetyl-CoA = N-acetyl-alpha-D-glucosamine 1-phosphate + CoA + H(+). It catalyses the reaction N-acetyl-alpha-D-glucosamine 1-phosphate + UTP + H(+) = UDP-N-acetyl-alpha-D-glucosamine + diphosphate. It functions in the pathway nucleotide-sugar biosynthesis; UDP-N-acetyl-alpha-D-glucosamine biosynthesis; N-acetyl-alpha-D-glucosamine 1-phosphate from alpha-D-glucosamine 6-phosphate (route II): step 2/2. The protein operates within nucleotide-sugar biosynthesis; UDP-N-acetyl-alpha-D-glucosamine biosynthesis; UDP-N-acetyl-alpha-D-glucosamine from N-acetyl-alpha-D-glucosamine 1-phosphate: step 1/1. Its pathway is bacterial outer membrane biogenesis; LPS lipid A biosynthesis. Catalyzes the last two sequential reactions in the de novo biosynthetic pathway for UDP-N-acetylglucosamine (UDP-GlcNAc). The C-terminal domain catalyzes the transfer of acetyl group from acetyl coenzyme A to glucosamine-1-phosphate (GlcN-1-P) to produce N-acetylglucosamine-1-phosphate (GlcNAc-1-P), which is converted into UDP-GlcNAc by the transfer of uridine 5-monophosphate (from uridine 5-triphosphate), a reaction catalyzed by the N-terminal domain. This Pseudothermotoga lettingae (strain ATCC BAA-301 / DSM 14385 / NBRC 107922 / TMO) (Thermotoga lettingae) protein is Bifunctional protein GlmU.